Consider the following 142-residue polypeptide: UPF0179 protein PH1477 (142 aa).

The protein belongs to the UPF0179 family.

This Pyrococcus horikoshii (strain ATCC 700860 / DSM 12428 / JCM 9974 / NBRC 100139 / OT-3) protein is UPF0179 protein PH1477.